We begin with the raw amino-acid sequence, 135 residues long: Probable histone H2A.2 (135 aa).

It belongs to the histone H2A family. The nucleosome is a histone octamer containing two molecules each of H2A, H2B, H3 and H4 assembled in one H3-H4 heterotetramer and two H2A-H2B heterodimers. The octamer wraps approximately 147 bp of DNA.

The protein localises to the nucleus. The protein resides in the chromosome. Functionally, core component of nucleosome. Nucleosomes wrap and compact DNA into chromatin, limiting DNA accessibility to the cellular machineries which require DNA as a template. Histones thereby play a central role in transcription regulation, DNA repair, DNA replication and chromosomal stability. DNA accessibility is regulated via a complex set of post-translational modifications of histones, also called histone code, and nucleosome remodeling. This Oryza sativa subsp. indica (Rice) protein is Probable histone H2A.2.